We begin with the raw amino-acid sequence, 144 residues long: Ribosomal RNA large subunit methyltransferase H (144 aa).

Residues Leu68, Gly96, and 112-117 each bind S-adenosyl-L-methionine; that span reads FSKLTF.

It belongs to the RNA methyltransferase RlmH family. In terms of assembly, homodimer.

The protein resides in the cytoplasm. It catalyses the reaction pseudouridine(1915) in 23S rRNA + S-adenosyl-L-methionine = N(3)-methylpseudouridine(1915) in 23S rRNA + S-adenosyl-L-homocysteine + H(+). Its function is as follows. Specifically methylates the pseudouridine at position 1915 (m3Psi1915) in 23S rRNA. The chain is Ribosomal RNA large subunit methyltransferase H from Mycoplasmopsis synoviae (strain 53) (Mycoplasma synoviae).